The chain runs to 218 residues: Ribose-5-phosphate isomerase A (218 aa).

Residues Lys7, 28 to 31 (TGST), 81 to 84 (DGAD), and 94 to 97 (KGGG) each bind substrate. Glu103 (proton acceptor) is an active-site residue. Residue Lys121 coordinates substrate.

Belongs to the ribose 5-phosphate isomerase family. In terms of assembly, homodimer.

It carries out the reaction aldehydo-D-ribose 5-phosphate = D-ribulose 5-phosphate. Its pathway is carbohydrate degradation; pentose phosphate pathway; D-ribose 5-phosphate from D-ribulose 5-phosphate (non-oxidative stage): step 1/1. Its function is as follows. Catalyzes the reversible conversion of ribose-5-phosphate to ribulose 5-phosphate. This chain is Ribose-5-phosphate isomerase A, found in Vibrio vulnificus (strain YJ016).